The primary structure comprises 448 residues: Amino-acid acetyltransferase (448 aa).

The N-acetyltransferase domain maps to 295–433 (EQIRRANIND…KQVLYNYQRR (139 aa)).

This sequence belongs to the acetyltransferase family. ArgA subfamily. In terms of assembly, homohexamer.

It is found in the cytoplasm. It carries out the reaction L-glutamate + acetyl-CoA = N-acetyl-L-glutamate + CoA + H(+). It functions in the pathway amino-acid biosynthesis; L-arginine biosynthesis; N(2)-acetyl-L-ornithine from L-glutamate: step 1/4. The polypeptide is Amino-acid acetyltransferase (Photorhabdus laumondii subsp. laumondii (strain DSM 15139 / CIP 105565 / TT01) (Photorhabdus luminescens subsp. laumondii)).